The following is a 346-amino-acid chain: Very-long-chain 3-oxoacyl-CoA reductase (346 aa).

The helical transmembrane segment at 26–46 (GASALLAAGSLFVVSRALVFV) threads the bilayer. V71, D126, D134, N153, Y220, K224, I253, and S255 together coordinate NADP(+). Y220 functions as the Proton donor in the catalytic mechanism. K224 (lowers pKa of active site Tyr) is an active-site residue.

The protein belongs to the short-chain dehydrogenases/reductases (SDR) family.

It is found in the endoplasmic reticulum membrane. The catalysed reaction is a very-long-chain (3R)-3-hydroxyacyl-CoA + NADP(+) = a very-long-chain 3-oxoacyl-CoA + NADPH + H(+). It participates in lipid metabolism; fatty acid biosynthesis. In terms of biological role, component of the microsomal membrane bound fatty acid elongation system, which produces the 26-carbon very long-chain fatty acids (VLCFA) from palmitate. Catalyzes the reduction of the 3-ketoacyl-CoA intermediate that is formed in each cycle of fatty acid elongation. VLCFAs serve as precursors for ceramide and sphingolipids. The protein is Very-long-chain 3-oxoacyl-CoA reductase of Aspergillus niger (strain ATCC MYA-4892 / CBS 513.88 / FGSC A1513).